Consider the following 617-residue polypeptide: BPI fold-containing family B member 4 (617 aa).

A signal peptide spans 1 to 17 (MWTAWCVAALSVAAVCG). Residues 124–149 (RPSDSAYHRGPGRYRSAADPSSAGRL) are disordered. The N-linked (GlcNAc...) asparagine glycan is linked to Asn-275. Cys-297 and Cys-334 are disulfide-bonded.

This sequence belongs to the BPI/LBP/Plunc superfamily. BPI/LBP family. Highly expressed in olfactory mucosa but undetectable in thymus, kidney, lung, brain, spleen and liver.

It localises to the secreted. The protein resides in the cytoplasm. Its function is as follows. May have the capacity to recognize and bind specific classes of odorants. May act as a carrier molecule, transporting odorants across the mucus layer to access receptor sites. May serve as a primary defense mechanism by recognizing and removing potentially harmful odorants or pathogenic microorganisms from the mucosa or clearing excess odorant from mucus to enable new odorant stimuli to be received. This is BPI fold-containing family B member 4 (Bpifb4) from Rattus norvegicus (Rat).